A 305-amino-acid polypeptide reads, in one-letter code: Probable aspartoacylase (305 aa).

Zn(2+)-binding residues include His13 and Glu16. Residues Arg55 and 62 to 63 (NR) each bind substrate. His105 serves as a coordination point for Zn(2+). Substrate-binding residues include Glu163 and Tyr273.

Belongs to the AspA/AstE family. Aspartoacylase subfamily. It depends on Zn(2+) as a cofactor.

It carries out the reaction an N-acyl-L-aspartate + H2O = a carboxylate + L-aspartate. The sequence is that of Probable aspartoacylase from Prochlorococcus marinus (strain NATL2A).